Here is a 211-residue protein sequence, read N- to C-terminus: Protein-L-isoaspartate O-methyltransferase (211 aa).

The active site involves S59.

The protein belongs to the methyltransferase superfamily. L-isoaspartyl/D-aspartyl protein methyltransferase family.

It is found in the cytoplasm. The enzyme catalyses [protein]-L-isoaspartate + S-adenosyl-L-methionine = [protein]-L-isoaspartate alpha-methyl ester + S-adenosyl-L-homocysteine. In terms of biological role, catalyzes the methyl esterification of L-isoaspartyl residues in peptides and proteins that result from spontaneous decomposition of normal L-aspartyl and L-asparaginyl residues. It plays a role in the repair and/or degradation of damaged proteins. The chain is Protein-L-isoaspartate O-methyltransferase from Ignicoccus hospitalis (strain KIN4/I / DSM 18386 / JCM 14125).